Reading from the N-terminus, the 753-residue chain is Protein-lysine N-methyltransferase SMYD4 (753 aa).

112–114 (RSA) provides a ligand contact to S-adenosyl-L-methionine. In terms of domain architecture, SET spans 186–528 (DGVSVYFSSD…AGQEILHCYG (343 aa)). Zn(2+) contacts are provided by Cys246, Cys249, Cys259, Cys262, Cys268, Cys272, His281, and Cys285. The MYND-type zinc finger occupies 246–285 (CHHCLSQSLSFVPCPKCSYARYCGESCQKDAWDQWHQWEC). S-adenosyl-L-methionine contacts are provided by residues 467–468 (NH) and Tyr527.

This sequence belongs to the class V-like SAM-binding methyltransferase superfamily.

The protein resides in the nucleus. It localises to the cytoplasm. The catalysed reaction is L-lysyl-[protein] + S-adenosyl-L-methionine = N(6)-methyl-L-lysyl-[protein] + S-adenosyl-L-homocysteine + H(+). Its function is as follows. Protein-lysine N-methyltransferase. Monomethylates PRMT5, modulating its transcriptional activity. May also act as a histone methyltransferase. Plays a critical role in cardiac development. Acts as a key epigenetic regulator of gene expression during cardiac development via its dual activities as a methyltransferase and negative regulator of HDAC1. The protein is Protein-lysine N-methyltransferase SMYD4 (smyd4) of Danio rerio (Zebrafish).